The following is a 198-amino-acid chain: Imidazoleglycerol-phosphate dehydratase (198 aa).

It belongs to the imidazoleglycerol-phosphate dehydratase family.

It is found in the cytoplasm. It catalyses the reaction D-erythro-1-(imidazol-4-yl)glycerol 3-phosphate = 3-(imidazol-4-yl)-2-oxopropyl phosphate + H2O. Its pathway is amino-acid biosynthesis; L-histidine biosynthesis; L-histidine from 5-phospho-alpha-D-ribose 1-diphosphate: step 6/9. The protein is Imidazoleglycerol-phosphate dehydratase of Gluconobacter oxydans (strain 621H) (Gluconobacter suboxydans).